We begin with the raw amino-acid sequence, 498 residues long: MASQGTKRSYEQMETDGDRQNATEIRASVGKMIDGIGRFYIQMCTELKLSDYEGRLIQNSLTIERMVLSAFDERRNKYLEEHPSAGKDPKKTGGPIYKRVDGKWMRELVLYDKEEIRRIWRQANNGDDATAGLTHMMIWHSNLNDTTYQRTRALVRTGMDPRMCSLMQGSTLPRRSGAAGAAVKGVGTMVMELIRMIKRGINDRNFWRGENGRKTRIAYERMCNILKGKFQTAAQRAMMDQVRESRNPGNAEIEDLIFLARSALILRGSVAHKSCLPACVYGPAVASGYDFEKEGYSLVGIDPFKLLQNSQVYSLIRPNENPAHKSQLVWMACNSAAFEDLRVSSFIRGTKVIPRGKLSTRGVQIASNENMDTMGSSTLELRSRYWAIRTRSGGNTNQQRASAGQISIQPTFSVQRNLPFDKTTIMAAFTGNAEGRTSDMRAEIIRMMESARPEEVSFQGRGVFELSDERAANPIVPSFDMSNEGSYFFGDNAEEYDN.

A Unconventional nuclear localization signal motif is present at residues 1–18; sequence MASQGTKRSYEQMETDGD. A disordered region spans residues 1 to 22; that stretch reads MASQGTKRSYEQMETDGDRQNA. The segment covering 8–21 has biased composition (basic and acidic residues); the sequence is RSYEQMETDGDRQN. The short motif at 198–216 is the Bipartite nuclear localization signal element; the sequence is KRGINDRNFWRGENGRKTR.

This sequence belongs to the influenza viruses nucleoprotein family. Homomultimerizes to form the nucleocapsid. May bind host exportin-1/XPO1. Binds to viral genomic RNA. Protein-RNA contacts are mediated by a combination of electrostatic interactions between positively charged residues and the phosphate backbone and planar interactions between aromatic side chains and bases. Post-translationally, late in virus-infected cells, may be cleaved from a 56-kDa protein to a 53-kDa protein by a cellular caspase. This cleavage might be a marker for the onset of apoptosis in infected cells or have a specific function in virus host interaction.

The protein localises to the virion. It localises to the host nucleus. Encapsidates the negative strand viral RNA, protecting it from nucleases. The encapsidated genomic RNA is termed the ribonucleoprotein (RNP) and serves as template for transcription and replication. The RNP needs to be localized in the host nucleus to start an infectious cycle, but is too large to diffuse through the nuclear pore complex. NP comprises at least 2 nuclear localization signals that are responsible for the active RNP import into the nucleus through cellular importin alpha/beta pathway. Later in the infection, nclear export of RNPs are mediated through viral proteins NEP interacting with M1 which binds nucleoproteins. It is possible that nucleoprotein binds directly host exportin-1/XPO1 and plays an active role in RNPs nuclear export. M1 interaction with RNP seems to hide nucleoprotein's nuclear localization signals. Soon after a virion infects a new cell, M1 dissociates from the RNP under acidification of the virion driven by M2 protein. Dissociation of M1 from RNP unmasks nucleoprotein's nuclear localization signals, targeting the RNP to the nucleus. The polypeptide is Nucleoprotein (Influenza A virus (strain A/Fort Warren/1/1950 H1N1)).